Here is a 490-residue protein sequence, read N- to C-terminus: Thiamine biosynthesis bifunctional protein ThiED (490 aa).

Residues 1-213 (MASNGHTLRL…PDPALAATEI (213 aa)) are thiamine-phosphate synthase. Residues 50–54 (QYRNK) and Asn-82 contribute to the 4-amino-2-methyl-5-(diphosphooxymethyl)pyrimidine site. Mg(2+)-binding residues include Asp-83 and Asp-102. Ser-121 serves as a coordination point for 4-amino-2-methyl-5-(diphosphooxymethyl)pyrimidine. 147-149 (SRS) provides a ligand contact to 2-[(2R,5Z)-2-carboxy-4-methylthiazol-5(2H)-ylidene]ethyl phosphate. Lys-150 serves as a coordination point for 4-amino-2-methyl-5-(diphosphooxymethyl)pyrimidine. Residues Gly-177 and 197-198 (IS) each bind 2-[(2R,5Z)-2-carboxy-4-methylthiazol-5(2H)-ylidene]ethyl phosphate. Residues 229–490 (LTVAGSDSGG…ILAAEDVRDR (262 aa)) form a hydroxymethylpyrimidine/phosphomethylpyrimidine kinase region. Gln-266 serves as a coordination point for 4-amino-5-hydroxymethyl-2-methylpyrimidine.

The protein in the N-terminal section; belongs to the thiamine-phosphate synthase family. This sequence in the C-terminal section; belongs to the ThiD family. The cofactor is Mg(2+).

The enzyme catalyses 2-[(2R,5Z)-2-carboxy-4-methylthiazol-5(2H)-ylidene]ethyl phosphate + 4-amino-2-methyl-5-(diphosphooxymethyl)pyrimidine + 2 H(+) = thiamine phosphate + CO2 + diphosphate. It catalyses the reaction 2-(2-carboxy-4-methylthiazol-5-yl)ethyl phosphate + 4-amino-2-methyl-5-(diphosphooxymethyl)pyrimidine + 2 H(+) = thiamine phosphate + CO2 + diphosphate. The catalysed reaction is 4-methyl-5-(2-phosphooxyethyl)-thiazole + 4-amino-2-methyl-5-(diphosphooxymethyl)pyrimidine + H(+) = thiamine phosphate + diphosphate. It carries out the reaction 4-amino-5-hydroxymethyl-2-methylpyrimidine + ATP = 4-amino-2-methyl-5-(phosphooxymethyl)pyrimidine + ADP + H(+). The enzyme catalyses 4-amino-2-methyl-5-(phosphooxymethyl)pyrimidine + ATP = 4-amino-2-methyl-5-(diphosphooxymethyl)pyrimidine + ADP. It participates in cofactor biosynthesis; thiamine diphosphate biosynthesis; 4-amino-2-methyl-5-diphosphomethylpyrimidine from 5-amino-1-(5-phospho-D-ribosyl)imidazole: step 3/3. Its pathway is cofactor biosynthesis; thiamine diphosphate biosynthesis; thiamine phosphate from 4-amino-2-methyl-5-diphosphomethylpyrimidine and 4-methyl-5-(2-phosphoethyl)-thiazole: step 1/1. Its function is as follows. Condenses 4-methyl-5-(beta-hydroxyethyl)thiazole monophosphate (THZ-P) and 2-methyl-4-amino-5-hydroxymethyl pyrimidine pyrophosphate (HMP-PP) to form thiamine monophosphate (TMP). Functionally, catalyzes the phosphorylation of hydroxymethylpyrimidine phosphate (HMP-P) to HMP-PP, and of HMP to HMP-P. In Geobacter sulfurreducens (strain ATCC 51573 / DSM 12127 / PCA), this protein is Thiamine biosynthesis bifunctional protein ThiED (thiDE).